A 307-amino-acid chain; its full sequence is Nucleotide-binding protein Arth_2083 (307 aa).

An ATP-binding site is contributed by 30–37 (GMSGAGRS). Position 81–84 (81–84 (DVRS)) interacts with GTP.

It belongs to the RapZ-like family.

Displays ATPase and GTPase activities. The chain is Nucleotide-binding protein Arth_2083 from Arthrobacter sp. (strain FB24).